Consider the following 238-residue polypeptide: Survival of motor neuron-related-splicing factor 30 (238 aa).

The Tudor domain maps to 72 to 132 (SWKVGDKCMA…KPVEEGRKAK (61 aa)). Positions 142-160 (KKEMIAQQREYKKKKALKK) match the Nuclear localization signal motif. At S201 the chain carries Phosphoserine. Position 219 is an N6-acetyllysine (K219).

This sequence belongs to the SMN family. Associates with spliceosomes. Associates with U4/U5/U6 tri-snRNP and with U2 snRNP. Interacts (via Tudor domain) with SNRPD3 (via C-terminus); the interaction is direct. Detected at intermediate levels in skeletal muscle, and at low levels in heart and pancreas.

Its subcellular location is the nucleus speckle. It is found in the nucleus. The protein resides in the cajal body. Involved in spliceosome assembly. The protein is Survival of motor neuron-related-splicing factor 30 (SMNDC1) of Homo sapiens (Human).